The primary structure comprises 362 residues: Aminomethyltransferase (362 aa).

This sequence belongs to the GcvT family. The glycine cleavage system is composed of four proteins: P, T, L and H.

It carries out the reaction N(6)-[(R)-S(8)-aminomethyldihydrolipoyl]-L-lysyl-[protein] + (6S)-5,6,7,8-tetrahydrofolate = N(6)-[(R)-dihydrolipoyl]-L-lysyl-[protein] + (6R)-5,10-methylene-5,6,7,8-tetrahydrofolate + NH4(+). In terms of biological role, the glycine cleavage system catalyzes the degradation of glycine. The polypeptide is Aminomethyltransferase (Chromobacterium violaceum (strain ATCC 12472 / DSM 30191 / JCM 1249 / CCUG 213 / NBRC 12614 / NCIMB 9131 / NCTC 9757 / MK)).